A 237-amino-acid polypeptide reads, in one-letter code: Cobalt-precorrin-2 C(20)-methyltransferase (237 aa).

Belongs to the precorrin methyltransferase family. As to quaternary structure, homodimer.

It carries out the reaction Co-precorrin-2 + S-adenosyl-L-methionine = Co-precorrin-3 + S-adenosyl-L-homocysteine + H(+). Its pathway is cofactor biosynthesis; adenosylcobalamin biosynthesis; cob(II)yrinate a,c-diamide from sirohydrochlorin (anaerobic route): step 2/10. Methylates cobalt-precorrin-2 at the C-20 position to produce cobalt-precorrin-3A in the anaerobic cobalamin biosynthesis pathway. This is Cobalt-precorrin-2 C(20)-methyltransferase (cbiL) from Salmonella typhimurium (strain LT2 / SGSC1412 / ATCC 700720).